Consider the following 418-residue polypeptide: Cell division protein FtsZ (418 aa).

Residues 27–31, 114–116, Glu145, Lys149, and Asp193 contribute to the GTP site; these read GGGSN and GTG. A disordered region spans residues 386-418; it reads KNGVKGHTFGVPLPSVNEDLDEPTFLRNRNKGL.

It belongs to the FtsZ family. In terms of assembly, homodimer. Polymerizes to form a dynamic ring structure in a strictly GTP-dependent manner. Interacts directly with several other division proteins.

The protein resides in the cytoplasm. In terms of biological role, essential cell division protein that forms a contractile ring structure (Z ring) at the future cell division site. The regulation of the ring assembly controls the timing and the location of cell division. One of the functions of the FtsZ ring is to recruit other cell division proteins to the septum to produce a new cell wall between the dividing cells. Binds GTP and shows GTPase activity. This Treponema pallidum (strain Nichols) protein is Cell division protein FtsZ.